Here is a 378-residue protein sequence, read N- to C-terminus: MADGLRVALVAGEASGDILGSGLMQALRARHPDIEFIGVGGPRMEAEGLSSYFPMERLSVMGLVEVLGRLPELLRRRKRLIRTLIEARPDVMIGIDAPDFTLGVEHKLRQAGLRTVHYVSPSVWAWRQKRVLKIREACDLMLALFPFEARFYEEHGVPVRFVGHPLANTIPLQADRAAARARLGLPADGQVVALMPGSRGGEVGKLGALFLDTAQRLLVERPGLRFVLPCASAARREQIEQMLQGREPLPLTLLDGASHEALAACDAVLIASGTATLEALLYKRPMVVAYRVAGLTYRILKRLVKSPYISLPNLLAGRLLVPELIQDAATPQALAATLSPLLDDGSQQVEFFDAIHRALRQDASAQAAEAVLQLVERR.

The protein belongs to the LpxB family.

The catalysed reaction is a lipid X + a UDP-2-N,3-O-bis[(3R)-3-hydroxyacyl]-alpha-D-glucosamine = a lipid A disaccharide + UDP + H(+). The protein operates within bacterial outer membrane biogenesis; LPS lipid A biosynthesis. Functionally, condensation of UDP-2,3-diacylglucosamine and 2,3-diacylglucosamine-1-phosphate to form lipid A disaccharide, a precursor of lipid A, a phosphorylated glycolipid that anchors the lipopolysaccharide to the outer membrane of the cell. This is Lipid-A-disaccharide synthase from Pseudomonas aeruginosa (strain UCBPP-PA14).